Reading from the N-terminus, the 207-residue chain is Thiamine-phosphate synthase (207 aa).

4-amino-2-methyl-5-(diphosphooxymethyl)pyrimidine is bound by residues 35–39 (QYRDK) and asparagine 67. Aspartate 68 and aspartate 86 together coordinate Mg(2+). Threonine 105 contacts 4-amino-2-methyl-5-(diphosphooxymethyl)pyrimidine. Position 132 to 134 (132 to 134 (SVT)) interacts with 2-[(2R,5Z)-2-carboxy-4-methylthiazol-5(2H)-ylidene]ethyl phosphate. A 4-amino-2-methyl-5-(diphosphooxymethyl)pyrimidine-binding site is contributed by lysine 135. Residue glycine 162 participates in 2-[(2R,5Z)-2-carboxy-4-methylthiazol-5(2H)-ylidene]ethyl phosphate binding.

It belongs to the thiamine-phosphate synthase family. Mg(2+) is required as a cofactor.

The catalysed reaction is 2-[(2R,5Z)-2-carboxy-4-methylthiazol-5(2H)-ylidene]ethyl phosphate + 4-amino-2-methyl-5-(diphosphooxymethyl)pyrimidine + 2 H(+) = thiamine phosphate + CO2 + diphosphate. It carries out the reaction 2-(2-carboxy-4-methylthiazol-5-yl)ethyl phosphate + 4-amino-2-methyl-5-(diphosphooxymethyl)pyrimidine + 2 H(+) = thiamine phosphate + CO2 + diphosphate. It catalyses the reaction 4-methyl-5-(2-phosphooxyethyl)-thiazole + 4-amino-2-methyl-5-(diphosphooxymethyl)pyrimidine + H(+) = thiamine phosphate + diphosphate. Its pathway is cofactor biosynthesis; thiamine diphosphate biosynthesis; thiamine phosphate from 4-amino-2-methyl-5-diphosphomethylpyrimidine and 4-methyl-5-(2-phosphoethyl)-thiazole: step 1/1. In terms of biological role, condenses 4-methyl-5-(beta-hydroxyethyl)thiazole monophosphate (THZ-P) and 2-methyl-4-amino-5-hydroxymethyl pyrimidine pyrophosphate (HMP-PP) to form thiamine monophosphate (TMP). The polypeptide is Thiamine-phosphate synthase (Pseudomonas putida (strain ATCC 700007 / DSM 6899 / JCM 31910 / BCRC 17059 / LMG 24140 / F1)).